Here is a 245-residue protein sequence, read N- to C-terminus: Putative MSV199 domain-containing protein 146R (245 aa).

In terms of domain architecture, GIY-YIG spans 2-97 (RKGYIYVIEN…NTLHGKLKNL (96 aa)).

The polypeptide is Putative MSV199 domain-containing protein 146R (Acheta domesticus (House cricket)).